We begin with the raw amino-acid sequence, 1856 residues long: Autophagy-related protein 2 (1856 aa).

Disordered regions lie at residues 123–167 (NTND…TGNK), 229–283 (LRTL…GNES), 309–328 (KSAASGIPGEVDNKATDKED), 395–428 (TKSRSAQRNEKFPQYTNDNDEIPEDQSESDDASH), 1157–1177 (LNGTENGSTSESSSQEASSLM), 1614–1647 (MLGGEGSSVRSPNLGGSDNRRNSNASDELPVEVA), and 1719–1741 (KLQPHTKGNHEGLTEEEEDEDED). Residues 137–147 (ASEDDDEDDID) show a composition bias toward acidic residues. A compositionally biased stretch (polar residues) spans 250–262 (KKQQGSDNDSPTD). Acidic residues predominate over residues 270–280 (NDNDDDDDDYG). Positions 412 to 424 (DNDEIPEDQSESD) are enriched in acidic residues. The span at 1157 to 1170 (LNGTENGSTSESSS) shows a compositional bias: low complexity. A compositionally biased stretch (polar residues) spans 1621 to 1639 (SVRSPNLGGSDNRRNSNAS). Residues 1732-1741 (TEEEEDEDED) are compositionally biased toward acidic residues.

Belongs to the ATG2 family.

The protein resides in the preautophagosomal structure membrane. The protein localises to the endoplasmic reticulum membrane. It catalyses the reaction a 1,2-diacyl-sn-glycero-3-phosphocholine(in) = a 1,2-diacyl-sn-glycero-3-phosphocholine(out). It carries out the reaction a 1,2-diacyl-sn-glycero-3-phospho-L-serine(in) = a 1,2-diacyl-sn-glycero-3-phospho-L-serine(out). The enzyme catalyses a 1,2-diacyl-sn-glycero-3-phosphoethanolamine(in) = a 1,2-diacyl-sn-glycero-3-phosphoethanolamine(out). Functionally, lipid transfer protein required for autophagosome completion and peroxisome degradation. Tethers the edge of the isolation membrane (IM) to the endoplasmic reticulum (ER) and mediates direct lipid transfer from ER to IM for IM expansion. ATG2/SPO72 binds to the ER exit site (ERES), which is the membrane source for autophagosome formation, using basic residues in its N-terminal region (NR) and to the expanding edge of the IM through its C-terminal region. The latter binding is assisted by an ATG18-PtdIns3P interaction. ATG2/SPO72 then extracts phospholipids from the membrane source using its NR and transfers them to ATG9 to the IM through its predicted beta-sheet-rich structure for membrane expansion. The protein is Autophagy-related protein 2 (SPO72) of Candida albicans (strain SC5314 / ATCC MYA-2876) (Yeast).